An 87-amino-acid polypeptide reads, in one-letter code: Class II metallothionein-like protein 1A (87 aa).

It belongs to the metallothionein superfamily. Type 15 family. Expressed in developing seeds.

Functionally, metallothioneins have a high content of cysteine residues that bind various heavy metals. The chain is Class II metallothionein-like protein 1A (MT21A) from Oryza sativa subsp. japonica (Rice).